The chain runs to 100 residues: Aspartyl/glutamyl-tRNA(Asn/Gln) amidotransferase subunit C (100 aa).

It belongs to the GatC family. In terms of assembly, heterotrimer of A, B and C subunits.

The enzyme catalyses L-glutamyl-tRNA(Gln) + L-glutamine + ATP + H2O = L-glutaminyl-tRNA(Gln) + L-glutamate + ADP + phosphate + H(+). It carries out the reaction L-aspartyl-tRNA(Asn) + L-glutamine + ATP + H2O = L-asparaginyl-tRNA(Asn) + L-glutamate + ADP + phosphate + 2 H(+). Functionally, allows the formation of correctly charged Asn-tRNA(Asn) or Gln-tRNA(Gln) through the transamidation of misacylated Asp-tRNA(Asn) or Glu-tRNA(Gln) in organisms which lack either or both of asparaginyl-tRNA or glutaminyl-tRNA synthetases. The reaction takes place in the presence of glutamine and ATP through an activated phospho-Asp-tRNA(Asn) or phospho-Glu-tRNA(Gln). In Streptococcus mutans serotype c (strain ATCC 700610 / UA159), this protein is Aspartyl/glutamyl-tRNA(Asn/Gln) amidotransferase subunit C.